The chain runs to 880 residues: Alanine--tRNA ligase (880 aa).

Residues H567, H571, C669, and H673 each contribute to the Zn(2+) site.

It belongs to the class-II aminoacyl-tRNA synthetase family. Requires Zn(2+) as cofactor.

Its subcellular location is the cytoplasm. It carries out the reaction tRNA(Ala) + L-alanine + ATP = L-alanyl-tRNA(Ala) + AMP + diphosphate. Functionally, catalyzes the attachment of alanine to tRNA(Ala) in a two-step reaction: alanine is first activated by ATP to form Ala-AMP and then transferred to the acceptor end of tRNA(Ala). Also edits incorrectly charged Ser-tRNA(Ala) and Gly-tRNA(Ala) via its editing domain. The protein is Alanine--tRNA ligase of Bacillus anthracis.